Reading from the N-terminus, the 218-residue chain is Large ribosomal subunit protein bL25 (218 aa).

Residues 187–218 form a disordered region; that stretch reads SATAAVEEAKEDGAPEESAQGQGAAEAQETNK. Residues 202-218 are compositionally biased toward low complexity; that stretch reads EESAQGQGAAEAQETNK.

It belongs to the bacterial ribosomal protein bL25 family. CTC subfamily. In terms of assembly, part of the 50S ribosomal subunit; part of the 5S rRNA/L5/L18/L25 subcomplex. Contacts the 5S rRNA. Binds to the 5S rRNA independently of L5 and L18.

Its function is as follows. This is one of the proteins that binds to the 5S RNA in the ribosome where it forms part of the central protuberance. This is Large ribosomal subunit protein bL25 from Anaplasma marginale (strain St. Maries).